The primary structure comprises 599 residues: Elongation factor 4 (599 aa).

A tr-type G domain is found at Glu-2–Lys-185. Residues Asp-14–Thr-19 and Asn-132–Asp-135 contribute to the GTP site.

Belongs to the TRAFAC class translation factor GTPase superfamily. Classic translation factor GTPase family. LepA subfamily.

It is found in the cell inner membrane. It catalyses the reaction GTP + H2O = GDP + phosphate + H(+). In terms of biological role, required for accurate and efficient protein synthesis under certain stress conditions. May act as a fidelity factor of the translation reaction, by catalyzing a one-codon backward translocation of tRNAs on improperly translocated ribosomes. Back-translocation proceeds from a post-translocation (POST) complex to a pre-translocation (PRE) complex, thus giving elongation factor G a second chance to translocate the tRNAs correctly. Binds to ribosomes in a GTP-dependent manner. This chain is Elongation factor 4, found in Hydrogenobaculum sp. (strain Y04AAS1).